A 1502-amino-acid chain; its full sequence is DNA-directed RNA polymerase subunit beta' (1502 aa).

Zn(2+) contacts are provided by Cys-60, Cys-62, Cys-75, and Cys-78. The tract at residues 265 to 293 (RKQRDLEDAEQLTGAERERKEYEASQERE) is disordered. The segment covering 279–293 (AERERKEYEASQERE) has biased composition (basic and acidic residues). Asp-626, Asp-628, and Asp-630 together coordinate Mg(2+). The Zn(2+) site is built by Cys-1002, Cys-1075, Cys-1082, and Cys-1085. Residues 1472 to 1502 (SDDNGDEVGKNGEFADETPFTGDSDDRDNEI) are disordered.

It belongs to the RNA polymerase beta' chain family. In terms of assembly, the RNAP catalytic core consists of 2 alpha, 1 beta, 1 beta' and 1 omega subunit. When a sigma factor is associated with the core the holoenzyme is formed, which can initiate transcription. It depends on Mg(2+) as a cofactor. The cofactor is Zn(2+).

The catalysed reaction is RNA(n) + a ribonucleoside 5'-triphosphate = RNA(n+1) + diphosphate. DNA-dependent RNA polymerase catalyzes the transcription of DNA into RNA using the four ribonucleoside triphosphates as substrates. This chain is DNA-directed RNA polymerase subunit beta', found in Roseiflexus castenholzii (strain DSM 13941 / HLO8).